We begin with the raw amino-acid sequence, 161 residues long: Ribonuclease P protein component 2 (161 aa).

Belongs to the eukaryotic/archaeal RNase P protein component 2 family. Consists of a catalytic RNA component and at least 4-5 protein subunits.

It localises to the cytoplasm. It carries out the reaction Endonucleolytic cleavage of RNA, removing 5'-extranucleotides from tRNA precursor.. In terms of biological role, part of ribonuclease P, a protein complex that generates mature tRNA molecules by cleaving their 5'-ends. This Methanopyrus kandleri (strain AV19 / DSM 6324 / JCM 9639 / NBRC 100938) protein is Ribonuclease P protein component 2.